The following is a 207-amino-acid chain: Putative threonylcarbamoyl-AMP synthase (207 aa).

Residues 15–199 enclose the YrdC-like domain; the sequence is EEERKKVLEF…KIISIREGVI (185 aa).

This sequence belongs to the SUA5 family.

It localises to the cytoplasm. The enzyme catalyses L-threonine + hydrogencarbonate + ATP = L-threonylcarbamoyladenylate + diphosphate + H2O. In terms of biological role, required for the formation of a threonylcarbamoyl group on adenosine at position 37 (t(6)A37) in tRNAs that read codons beginning with adenine. Catalyzes the conversion of L-threonine, HCO(3)(-)/CO(2) and ATP to give threonylcarbamoyl-AMP (TC-AMP) as the acyladenylate intermediate, with the release of diphosphate. The polypeptide is Putative threonylcarbamoyl-AMP synthase (Methanocaldococcus jannaschii (strain ATCC 43067 / DSM 2661 / JAL-1 / JCM 10045 / NBRC 100440) (Methanococcus jannaschii)).